The sequence spans 578 residues: Protein O-linked-mannose beta-1,4-N-acetylglucosaminyltransferase 2 (578 aa).

Over 1 to 4 (MNLP) the chain is Cytoplasmic. The chain crosses the membrane as a helical; Signal-anchor for type II membrane protein span at residues 5 to 25 (AVLNGLLVSVVAALLWKYVRL). Residues 26-578 (VEHTSQLEEE…PFADVLICKT (553 aa)) lie on the Lumenal side of the membrane. 3 N-linked (GlcNAc...) asparagine glycosylation sites follow: Asn-98, Asn-275, and Asn-541. A Fibronectin type-III domain is found at 482–578 (RVREPKCQTS…PFADVLICKT (97 aa)).

It belongs to the glycosyltransferase 61 family.

It localises to the endoplasmic reticulum membrane. The enzyme catalyses 3-O-(alpha-D-mannosyl)-L-threonyl-[protein] + UDP-N-acetyl-alpha-D-glucosamine = 3-O-(N-acetyl-beta-D-glucosaminyl-(1-&gt;4)-alpha-D-mannosyl)-L-threonyl-[protein] + UDP + H(+). Its pathway is protein modification; protein glycosylation. Its function is as follows. O-linked mannose beta-1,4-N-acetylglucosaminyltransferase that transfers UDP-N-acetyl-D-glucosamine to the 4-position of the mannose to generate N-acetyl-D-glucosamine-beta-1,4-O-D-mannosylprotein. Involved in the biosynthesis of the phosphorylated O-mannosyl trisaccharide (N-acetylgalactosamine-beta-3-N-acetylglucosamine-beta-4-(phosphate-6-)mannose), a carbohydrate structure present in alpha-dystroglycan (DAG1), which is required for binding laminin G-like domain-containing extracellular proteins with high affinity. In Danio rerio (Zebrafish), this protein is Protein O-linked-mannose beta-1,4-N-acetylglucosaminyltransferase 2 (pomgnt2).